The following is a 355-amino-acid chain: uncharacterized protein (355 aa).

An N-terminal signal peptide occupies residues 1–27 (MESPIRTARRTLPLLIGATCLVLALTG). Cys28 carries the N-palmitoyl cysteine lipid modification. Cys28 carries the S-diacylglycerol cysteine lipid modification. The disordered stretch occupies residues 33-53 (GPAQARPTPSASTSPKQAPAL). The span at 39–48 (PTPSASTSPK) shows a compositional bias: polar residues.

Its subcellular location is the cell membrane. This is an uncharacterized protein from Streptomyces coelicolor (strain ATCC BAA-471 / A3(2) / M145).